A 487-amino-acid polypeptide reads, in one-letter code: Beta-barrel assembly-enhancing protease (487 aa).

The signal sequence occupies residues 1–27 (MFRQLKKNLVATLIAAMTIGQVAPAFA). Residue histidine 136 coordinates Zn(2+). Residue glutamate 137 is part of the active site. Zn(2+) is bound by residues histidine 140 and glutamate 201. Aspartate 205 (proton donor) is an active-site residue. 4 TPR repeats span residues 309–342 (RAAQYGRALQAMEANKYDEARKTLQPLLAAEPGN), 344–376 (WYLDLATDIDLGQNKANEAINRLKNARDLRTNP), 377–409 (VLQLNLANAYLQGGQPQEAANILNRYTFNNKDD), and 427–460 (DQELAARAEGYALAGRLDQAISLLSSASSQVKLG).

Belongs to the peptidase M48 family. BepA subfamily. In terms of assembly, interacts with BamA and LoiP. Requires Zn(2+) as cofactor.

The protein resides in the periplasm. Protease activity is inhibited by the metal chelating reagents 1,10-phenanthroline and EDTA. Its function is as follows. Functions both as a chaperone and a metalloprotease. Maintains the integrity of the outer membrane by promoting either the assembly or the elimination of outer membrane proteins, depending on their folding state. Promotes disulfide rearrangement of LptD during its biogenesis, and proteolytic degradation of LptD and BamA when their proper assembly is compromised. May facilitate membrane attachment of LoiP under unfavorable conditions. In Escherichia coli (strain K12), this protein is Beta-barrel assembly-enhancing protease.